Reading from the N-terminus, the 765-residue chain is Beta-glucosidase cel3A (765 aa).

Residues 1–24 form the signal peptide; it reads MRWSSPTSSSLSLVALLLVAHVDA. N66, N124, N250, N304, N311, N349, N549, N588, N657, and N681 each carry an N-linked (GlcNAc...) asparagine glycan.

It belongs to the glycosyl hydrolase 3 family.

It is found in the secreted. The enzyme catalyses Hydrolysis of terminal, non-reducing beta-D-glucosyl residues with release of beta-D-glucose.. The protein operates within glycan metabolism; cellulose degradation. Beta-glucosidases are one of a number of cellulolytic enzymes involved in the degradation of cellulosic biomass. Catalyzes the last step releasing glucose from the inhibitory cellobiose. Shows higher activities on cellobiose and cellotriose but lower activities on laminarioligosaccharides and polymers. The protein is Beta-glucosidase cel3A of Pyricularia oryzae (strain 70-15 / ATCC MYA-4617 / FGSC 8958) (Rice blast fungus).